The following is a 115-amino-acid chain: Peptidyl-tRNA hydrolase (115 aa).

This sequence belongs to the PTH2 family.

The protein localises to the cytoplasm. The enzyme catalyses an N-acyl-L-alpha-aminoacyl-tRNA + H2O = an N-acyl-L-amino acid + a tRNA + H(+). Its function is as follows. The natural substrate for this enzyme may be peptidyl-tRNAs which drop off the ribosome during protein synthesis. The polypeptide is Peptidyl-tRNA hydrolase (Methanococcoides burtonii (strain DSM 6242 / NBRC 107633 / OCM 468 / ACE-M)).